Here is a 186-residue protein sequence, read N- to C-terminus: UPF0301 protein CGSHiEE_01530 (186 aa).

This sequence belongs to the UPF0301 (AlgH) family.

The sequence is that of UPF0301 protein CGSHiEE_01530 from Haemophilus influenzae (strain PittEE).